The chain runs to 309 residues: Formimidoylglutamase (309 aa).

Positions 120, 145, 147, 149, 236, and 238 each coordinate Mn(2+).

This sequence belongs to the arginase family. Mn(2+) is required as a cofactor.

The catalysed reaction is N-formimidoyl-L-glutamate + H2O = formamide + L-glutamate. The protein operates within amino-acid degradation; L-histidine degradation into L-glutamate; L-glutamate from N-formimidoyl-L-glutamate (hydrolase route): step 1/1. In terms of biological role, catalyzes the conversion of N-formimidoyl-L-glutamate to L-glutamate and formamide. This chain is Formimidoylglutamase, found in Chromobacterium violaceum (strain ATCC 12472 / DSM 30191 / JCM 1249 / CCUG 213 / NBRC 12614 / NCIMB 9131 / NCTC 9757 / MK).